Reading from the N-terminus, the 554-residue chain is Phosphoglucomutase (554 aa).

Arg-21 serves as a coordination point for alpha-D-glucose 1,6-bisphosphate. A Phosphothreonine modification is found at Thr-111. Ser-113 serves as a coordination point for alpha-D-glucose 1,6-bisphosphate. Ser-113 serves as the catalytic Phosphoserine intermediate. Positions 113, 278, 280, and 282 each coordinate Mg(2+). The residue at position 113 (Ser-113) is a Phosphoserine. Alpha-D-glucose 1,6-bisphosphate is bound by residues Asp-282, Arg-283, Thr-346, Glu-365, Ser-367, and Lys-378.

This sequence belongs to the phosphohexose mutase family. Monomer. Mg(2+) serves as cofactor.

It localises to the cytoplasm. It is found in the nucleus. It carries out the reaction alpha-D-glucose 1-phosphate = alpha-D-glucose 6-phosphate. The catalysed reaction is O-phospho-L-seryl-[protein] + alpha-D-glucose 1-phosphate = alpha-D-glucose 1,6-bisphosphate + L-seryl-[protein]. It catalyses the reaction alpha-D-glucose 1,6-bisphosphate + L-seryl-[protein] = O-phospho-L-seryl-[protein] + alpha-D-glucose 6-phosphate. Catalyzes the reversible isomerization of alpha-D-glucose 1-phosphate to alpha-D-glucose 6-phosphate. The mechanism proceeds via the intermediate compound alpha-D-glucose 1,6-bisphosphate. Key enzyme in hexose metabolism. The reverse reaction is an essential step for biosynthesis because glucose 1-phosphate is the starting point for the synthesis of UDP-glucose, which acts as a precursor for the synthesis of oligosaccharides and trehalose. This chain is Phosphoglucomutase, found in Schizosaccharomyces pombe (strain 972 / ATCC 24843) (Fission yeast).